The chain runs to 424 residues: Argininosuccinate synthase (424 aa).

Residues 9 to 17 (AYSGGLDTS) and Ala-35 each bind ATP. Residues Tyr-86 and Ser-91 each coordinate L-citrulline. Position 114-122 (114-122 (SHGATGKGN)) interacts with ATP. Residues Thr-118, Asn-122, and Asp-123 each contribute to the L-aspartate site. Asn-122 contributes to the L-citrulline binding site. Arg-126, Ser-179, Ser-188, Glu-269, and Tyr-281 together coordinate L-citrulline.

This sequence belongs to the argininosuccinate synthase family. Homotetramer.

It catalyses the reaction L-citrulline + L-aspartate + ATP = 2-(N(omega)-L-arginino)succinate + AMP + diphosphate + H(+). The protein operates within amino-acid biosynthesis; L-arginine biosynthesis; L-arginine from L-ornithine and carbamoyl phosphate: step 2/3. Its pathway is nitrogen metabolism; urea cycle; (N(omega)-L-arginino)succinate from L-aspartate and L-citrulline: step 1/1. This chain is Argininosuccinate synthase, found in Anopheles gambiae (African malaria mosquito).